The following is a 182-amino-acid chain: Adenine phosphoribosyltransferase (182 aa).

Belongs to the purine/pyrimidine phosphoribosyltransferase family. Homodimer.

It is found in the cytoplasm. It carries out the reaction AMP + diphosphate = 5-phospho-alpha-D-ribose 1-diphosphate + adenine. It participates in purine metabolism; AMP biosynthesis via salvage pathway; AMP from adenine: step 1/1. Catalyzes a salvage reaction resulting in the formation of AMP, that is energically less costly than de novo synthesis. The sequence is that of Adenine phosphoribosyltransferase from Pseudomonas fluorescens (strain SBW25).